The chain runs to 571 residues: Proline--tRNA ligase (571 aa).

It belongs to the class-II aminoacyl-tRNA synthetase family. ProS type 1 subfamily. As to quaternary structure, homodimer.

It is found in the cytoplasm. The enzyme catalyses tRNA(Pro) + L-proline + ATP = L-prolyl-tRNA(Pro) + AMP + diphosphate. Functionally, catalyzes the attachment of proline to tRNA(Pro) in a two-step reaction: proline is first activated by ATP to form Pro-AMP and then transferred to the acceptor end of tRNA(Pro). As ProRS can inadvertently accommodate and process non-cognate amino acids such as alanine and cysteine, to avoid such errors it has two additional distinct editing activities against alanine. One activity is designated as 'pretransfer' editing and involves the tRNA(Pro)-independent hydrolysis of activated Ala-AMP. The other activity is designated 'posttransfer' editing and involves deacylation of mischarged Ala-tRNA(Pro). The misacylated Cys-tRNA(Pro) is not edited by ProRS. The chain is Proline--tRNA ligase from Pseudomonas putida (strain ATCC 47054 / DSM 6125 / CFBP 8728 / NCIMB 11950 / KT2440).